Here is a 296-residue protein sequence, read N- to C-terminus: Aldo-keto reductase MYCFIDRAFT_156381 (296 aa).

An NADP(+)-binding site is contributed by D14. The Proton donor role is filled by Y19. Residue H83 coordinates substrate. NADP(+) is bound by residues 113–114, Q139, 168–178, and R191; these read CN and SPLAGGMLTDR. Y201 contributes to the substrate binding site. An NADP(+)-binding site is contributed by 255–263; sequence SSAEQLESN.

This sequence belongs to the aldo/keto reductase family. Aldo/keto reductase 2 subfamily.

It participates in secondary metabolite biosynthesis. Functionally, aldo-keto reductase; part of the gene cluster that mediates the biosynthesis of an emodin derivative that may be involved in black Sigatoka disease of banana. The pathway begins with the synthesis of atrochrysone thioester by the polyketide synthase PKS8-1. The atrochrysone carboxyl ACP thioesterase MYCFIDRAFT_190111 then breaks the thioester bond and releases the atrochrysone carboxylic acid from PKS8-1. The decarboxylase MYCFIDRAFT_34057 then catalyzes the concerted decarboxylation-elimination required to convert atochrysone carboxylic acid into emodin anthrone, which is further oxidized to emodin by the anthrone oxygenase MYCFIDRAFT_34418. The functions of the other tailoring enzymes as well as the final product of the cluster have still to be identified. The polypeptide is Aldo-keto reductase MYCFIDRAFT_156381 (Pseudocercospora fijiensis (strain CIRAD86) (Black leaf streak disease fungus)).